Consider the following 284-residue polypeptide: 4-hydroxy-3-methylbut-2-enyl diphosphate reductase (284 aa).

Cysteine 12 is a binding site for [4Fe-4S] cluster. Histidine 40 and histidine 72 together coordinate (2E)-4-hydroxy-3-methylbut-2-enyl diphosphate. Residues histidine 40 and histidine 72 each coordinate dimethylallyl diphosphate. Residues histidine 40 and histidine 72 each contribute to the isopentenyl diphosphate site. Position 94 (cysteine 94) interacts with [4Fe-4S] cluster. Histidine 122 contacts (2E)-4-hydroxy-3-methylbut-2-enyl diphosphate. Histidine 122 contributes to the dimethylallyl diphosphate binding site. Histidine 122 lines the isopentenyl diphosphate pocket. Glutamate 124 (proton donor) is an active-site residue. A (2E)-4-hydroxy-3-methylbut-2-enyl diphosphate-binding site is contributed by threonine 161. Cysteine 193 is a [4Fe-4S] cluster binding site. (2E)-4-hydroxy-3-methylbut-2-enyl diphosphate contacts are provided by serine 221, asparagine 223, and serine 264. Positions 221, 223, and 264 each coordinate dimethylallyl diphosphate. Isopentenyl diphosphate contacts are provided by serine 221, asparagine 223, and serine 264.

The protein belongs to the IspH family. Requires [4Fe-4S] cluster as cofactor.

The catalysed reaction is isopentenyl diphosphate + 2 oxidized [2Fe-2S]-[ferredoxin] + H2O = (2E)-4-hydroxy-3-methylbut-2-enyl diphosphate + 2 reduced [2Fe-2S]-[ferredoxin] + 2 H(+). It carries out the reaction dimethylallyl diphosphate + 2 oxidized [2Fe-2S]-[ferredoxin] + H2O = (2E)-4-hydroxy-3-methylbut-2-enyl diphosphate + 2 reduced [2Fe-2S]-[ferredoxin] + 2 H(+). It participates in isoprenoid biosynthesis; dimethylallyl diphosphate biosynthesis; dimethylallyl diphosphate from (2E)-4-hydroxy-3-methylbutenyl diphosphate: step 1/1. It functions in the pathway isoprenoid biosynthesis; isopentenyl diphosphate biosynthesis via DXP pathway; isopentenyl diphosphate from 1-deoxy-D-xylulose 5-phosphate: step 6/6. Its function is as follows. Catalyzes the conversion of 1-hydroxy-2-methyl-2-(E)-butenyl 4-diphosphate (HMBPP) into a mixture of isopentenyl diphosphate (IPP) and dimethylallyl diphosphate (DMAPP). Acts in the terminal step of the DOXP/MEP pathway for isoprenoid precursor biosynthesis. This Dehalococcoides mccartyi (strain CBDB1) protein is 4-hydroxy-3-methylbut-2-enyl diphosphate reductase.